A 307-amino-acid polypeptide reads, in one-letter code: UAP56-interacting factor (307 aa).

Positions 1 to 25 (MSGFGAAALLSGSSAAAGTRSGSSD) are enriched in low complexity. Disordered regions lie at residues 1 to 28 (MSGF…DSLE) and 41 to 85 (NKKE…KNHL). Residues 26–44 (SLEKIDMSLDDIIKLNKKE) carry the UAP56-binding motif motif. Residues 57–78 (LQQNRTQQFRTPGSKWGIQQQK) show a composition bias toward polar residues.

This sequence belongs to the UIF family. As to expression, widely expressed.

The protein resides in the nucleus. It localises to the nucleoplasm. It is found in the nucleus speckle. In terms of biological role, required for mRNA export from the nucleus to the cytoplasm. Acts as an adapter that uses the DDX39B/UAP56-NFX1 pathway to ensure efficient mRNA export and delivering to the nuclear pore. The protein is UAP56-interacting factor (FYTTD1) of Gallus gallus (Chicken).